The sequence spans 150 residues: Large ribosomal subunit protein bL9 (150 aa).

Belongs to the bacterial ribosomal protein bL9 family.

Binds to the 23S rRNA. The sequence is that of Large ribosomal subunit protein bL9 from Burkholderia pseudomallei (strain 668).